Here is a 547-residue protein sequence, read N- to C-terminus: Nitrate transporter 2.1 (547 aa).

12 helical membrane passes run Trp-53–Ile-73, Asn-86–Val-106, Tyr-113–Thr-133, Phe-143–Phe-163, Ala-173–Ile-193, Ala-211–Ile-231, Leu-262–Val-280, Phe-296–Phe-316, Ile-338–Val-358, Ile-366–Ile-386, Gly-400–Gly-420, and Gly-433–Phe-453.

This sequence belongs to the major facilitator superfamily. Nitrate/nitrite porter (TC 2.A.1.8) family.

Its subcellular location is the cell membrane. Nitrite transport mediated by system 1 is very sensitive to inhibition by nitrate. Its function is as follows. Involved in nitrate transport, but does not seem to be able to mediate transport by its own. Acts as a dual component transporter with NAR2 (system 1). Imports nitrate with high affinity when expressed with NAR2 in a heterologous system (Xenopus oocytes). Involved in a high affinity and a high capacity transport specific for both nitrate and nitrite. In Chlamydomonas reinhardtii (Chlamydomonas smithii), this protein is Nitrate transporter 2.1.